Consider the following 156-residue polypeptide: Transcription elongation factor GreA (156 aa).

Positions 2 to 27 (EKTFPMTKEGLDKLKAELENLKLVKR) form a coiled coil.

The protein belongs to the GreA/GreB family.

Necessary for efficient RNA polymerase transcription elongation past template-encoded arresting sites. The arresting sites in DNA have the property of trapping a certain fraction of elongating RNA polymerases that pass through, resulting in locked ternary complexes. Cleavage of the nascent transcript by cleavage factors such as GreA or GreB allows the resumption of elongation from the new 3'terminus. GreA releases sequences of 2 to 3 nucleotides. The sequence is that of Transcription elongation factor GreA from Lactococcus lactis subsp. cremoris (strain SK11).